The chain runs to 151 residues: FAD synthase (151 aa).

Residues 21–22 (TF), 26–29 (HPGH), and aspartate 104 each bind ATP.

Belongs to the archaeal FAD synthase family. Homodimer. A divalent metal cation is required as a cofactor.

It carries out the reaction FMN + ATP + H(+) = FAD + diphosphate. It participates in cofactor biosynthesis; FAD biosynthesis; FAD from FMN: step 1/1. Functionally, catalyzes the transfer of the AMP portion of ATP to flavin mononucleotide (FMN) to produce flavin adenine dinucleotide (FAD) coenzyme. This chain is FAD synthase, found in Methanosarcina acetivorans (strain ATCC 35395 / DSM 2834 / JCM 12185 / C2A).